Consider the following 679-residue polypeptide: Protein FAM178B (679 aa).

Residues 70 to 113 (PLDQGPRCPARRPCSPASAPAPTSPKKPKIQAPGETFPTDWSPP) are disordered. Over residues 75–90 (PRCPARRPCSPASAPA) the composition is skewed to low complexity.

It belongs to the FAM178 family.

In Homo sapiens (Human), this protein is Protein FAM178B.